The following is a 93-amino-acid chain: Small ribosomal subunit protein bS20 (93 aa).

A compositionally biased stretch (basic and acidic residues) spans 1-11 (MPQHKSAEKRV). Residues 1–23 (MPQHKSAEKRVRQSKRRNARNRV) are disordered. Over residues 12 to 23 (RQSKRRNARNRV) the composition is skewed to basic residues.

Belongs to the bacterial ribosomal protein bS20 family.

Its function is as follows. Binds directly to 16S ribosomal RNA. The sequence is that of Small ribosomal subunit protein bS20 from Chloroherpeton thalassium (strain ATCC 35110 / GB-78).